A 957-amino-acid polypeptide reads, in one-letter code: Glycine dehydrogenase (decarboxylating) (957 aa).

K702 is modified (N6-(pyridoxal phosphate)lysine).

Belongs to the GcvP family. In terms of assembly, the glycine cleavage system is composed of four proteins: P, T, L and H. Pyridoxal 5'-phosphate is required as a cofactor.

It catalyses the reaction N(6)-[(R)-lipoyl]-L-lysyl-[glycine-cleavage complex H protein] + glycine + H(+) = N(6)-[(R)-S(8)-aminomethyldihydrolipoyl]-L-lysyl-[glycine-cleavage complex H protein] + CO2. Its function is as follows. The glycine cleavage system catalyzes the degradation of glycine. The P protein binds the alpha-amino group of glycine through its pyridoxal phosphate cofactor; CO(2) is released and the remaining methylamine moiety is then transferred to the lipoamide cofactor of the H protein. This is Glycine dehydrogenase (decarboxylating) from Synechococcus sp. (strain RCC307).